Here is a 234-residue protein sequence, read N- to C-terminus: 1-(5-phosphoribosyl)-5-[(5-phosphoribosylamino)methylideneamino] imidazole-4-carboxamide isomerase (234 aa).

D9 acts as the Proton acceptor in catalysis. Residue D131 is the Proton donor of the active site.

Belongs to the HisA/HisF family.

The protein resides in the cytoplasm. It catalyses the reaction 1-(5-phospho-beta-D-ribosyl)-5-[(5-phospho-beta-D-ribosylamino)methylideneamino]imidazole-4-carboxamide = 5-[(5-phospho-1-deoxy-D-ribulos-1-ylimino)methylamino]-1-(5-phospho-beta-D-ribosyl)imidazole-4-carboxamide. The protein operates within amino-acid biosynthesis; L-histidine biosynthesis; L-histidine from 5-phospho-alpha-D-ribose 1-diphosphate: step 4/9. The polypeptide is 1-(5-phosphoribosyl)-5-[(5-phosphoribosylamino)methylideneamino] imidazole-4-carboxamide isomerase (Staphylococcus saprophyticus subsp. saprophyticus (strain ATCC 15305 / DSM 20229 / NCIMB 8711 / NCTC 7292 / S-41)).